Here is a 264-residue protein sequence, read N- to C-terminus: Thymidylate synthase (264 aa).

R21 contacts dUMP. A (6R)-5,10-methylene-5,6,7,8-tetrahydrofolate-binding site is contributed by H51. 126–127 (RR) contributes to the dUMP binding site. C146 (nucleophile) is an active-site residue. Residues 166–169 (RSAD), N177, and 207–209 (HLY) each bind dUMP. D169 is a (6R)-5,10-methylene-5,6,7,8-tetrahydrofolate binding site. Residue S263 coordinates (6R)-5,10-methylene-5,6,7,8-tetrahydrofolate.

The protein belongs to the thymidylate synthase family. Bacterial-type ThyA subfamily. Homodimer.

The protein localises to the cytoplasm. The enzyme catalyses dUMP + (6R)-5,10-methylene-5,6,7,8-tetrahydrofolate = 7,8-dihydrofolate + dTMP. Its pathway is pyrimidine metabolism; dTTP biosynthesis. Catalyzes the reductive methylation of 2'-deoxyuridine-5'-monophosphate (dUMP) to 2'-deoxythymidine-5'-monophosphate (dTMP) while utilizing 5,10-methylenetetrahydrofolate (mTHF) as the methyl donor and reductant in the reaction, yielding dihydrofolate (DHF) as a by-product. This enzymatic reaction provides an intracellular de novo source of dTMP, an essential precursor for DNA biosynthesis. This is Thymidylate synthase from Neisseria meningitidis serogroup A / serotype 4A (strain DSM 15465 / Z2491).